The chain runs to 579 residues: Protein downstream neighbor of son homolog (579 aa).

Disordered stretches follow at residues 1–68 (MAEL…RRNP) and 331–379 (FSQP…DESF). Residues 339–348 (DTGKKQKKPE) show a composition bias toward basic and acidic residues. Residues 365-378 (EADEASDESDEDES) show a composition bias toward acidic residues.

Belongs to the DONSON family. As to quaternary structure, component of the replisome complex.

Its subcellular location is the nucleus. Replisome component that maintains genome stability by protecting stalled or damaged replication forks. After the induction of replication stress, required for the stabilization of stalled replication forks, the efficient activation of the intra-S-phase and G/2M cell-cycle checkpoints and the maintenance of genome stability. The chain is Protein downstream neighbor of son homolog from Xenopus laevis (African clawed frog).